A 310-amino-acid chain; its full sequence is Apolipoprotein E (310 aa).

Positions 1 to 18 (MKVLWAALVVTLLAGCGA) are cleaved as a signal peptide. 8 tandem repeats follow at residues 77-98 (ALMDDTMKEVKACQSELEEQLG), 99-120 (PVTEETKARVSKELQAAQARLG), 121-142 (ADMEEVRSRLAQYRGELQAMVG), 143-164 (QSTEELRGRLSAHLRKMRKRLL), 165-186 (RDAEDLQRRLAVYQAGIWEGAE), 187-208 (RSVNTLREHLGPLAEQAATVHT), 209-226 (LVSKPLQERAEAWAQRLR), and 227-248 (GRLEKAGFPVGDRLDEVREQVQ). Residues 77–248 (ALMDDTMKEV…RLDEVREQVQ (172 aa)) form an 8 X 22 AA approximate tandem repeats region. The interval 155 to 165 (HLRKMRKRLLR) is LDL and other lipoprotein receptors binding. Position 159-162 (159-162 (MRKR)) interacts with heparin. Residues 207 to 283 (HTLVSKPLQE…SWFEPLVQDM (77 aa)) are lipid-binding and lipoprotein association. Position 222–229 (222–229 (AQRLRGRL)) interacts with heparin. Residues 259-310 (NQVRLQAEAFQGRLKSWFEPLVQDMQQKWAELVEKVQLAVGAVPTSVPSEKQ) form a homooligomerization region. The interval 271 to 283 (RLKSWFEPLVQDM) is specificity for association with VLDL.

It belongs to the apolipoprotein A1/A4/E family. As to quaternary structure, homotetramer. May interact with ABCA1; functionally associated with ABCA1 in the biogenesis of HDLs. May interact with APP/A4 amyloid-beta peptide; the interaction is extremely stable in vitro but its physiological significance is unclear. May interact with MAPT. May interact with MAP2. In the cerebrospinal fluid, interacts with secreted SORL1. Interacts with PMEL; this allows the loading of PMEL luminal fragment on ILVs to induce fibril nucleation. Post-translationally, APOE exists as multiple glycosylated and sialylated glycoforms within cells and in plasma. The extent of glycosylation and sialylation are tissue and context specific. Glycated in plasma VLDL. In terms of processing, phosphorylated by FAM20C in the extracellular medium.

It localises to the secreted. The protein localises to the extracellular space. It is found in the extracellular matrix. Its subcellular location is the extracellular vesicle. The protein resides in the endosome. It localises to the multivesicular body. Its function is as follows. APOE is an apolipoprotein, a protein associating with lipid particles, that mainly functions in lipoprotein-mediated lipid transport between organs via the plasma and interstitial fluids. APOE is a core component of plasma lipoproteins and is involved in their production, conversion and clearance. Apolipoproteins are amphipathic molecules that interact both with lipids of the lipoprotein particle core and the aqueous environment of the plasma. As such, APOE associates with chylomicrons, chylomicron remnants, very low density lipoproteins (VLDL) and intermediate density lipoproteins (IDL) but shows a preferential binding to high-density lipoproteins (HDL). It also binds a wide range of cellular receptors including the LDL receptor/LDLR and the very low-density lipoprotein receptor/VLDLR that mediate the cellular uptake of the APOE-containing lipoprotein particles. Finally, APOE also has a heparin-binding activity and binds heparan-sulfate proteoglycans on the surface of cells, a property that supports the capture and the receptor-mediated uptake of APOE-containing lipoproteins by cells. In Ceratotherium simum cottoni (Northern white rhinoceros), this protein is Apolipoprotein E (APOE).